Here is a 77-residue protein sequence, read N- to C-terminus: Large ribosomal subunit protein uL24c (77 aa).

It belongs to the universal ribosomal protein uL24 family. Part of the 50S ribosomal subunit.

It is found in the plastid. It localises to the chloroplast. In terms of biological role, one of two assembly initiator proteins, it binds directly to the 5'-end of the 23S rRNA, where it nucleates assembly of the 50S subunit. The polypeptide is Large ribosomal subunit protein uL24c (rpl24) (Trieres chinensis (Marine centric diatom)).